The sequence spans 203 residues: MMENLQVNQREKKTRHSSRQCRRKGLVPGVIYGKGINNFLFEIGELELNHALSVTGEHGLLSINSQEGSLNTLIKEVQRDPVTRRVLHIDLEKVEGNEEIETAVPINYVGEEYINKLDAVLQKNLDSIKVKCSPSNIPKGVNLNVGRAKPGDQFKIADVEFGNEITVVDDLNSIVASVSYDQKIITQEVVDQEVAENRAKKES.

Positions 1–21 (MMENLQVNQREKKTRHSSRQC) are disordered. Residues 12–21 (KKTRHSSRQC) are compositionally biased toward basic residues.

The protein belongs to the bacterial ribosomal protein bL25 family. CTC subfamily. Part of the 50S ribosomal subunit; part of the 5S rRNA/L5/L18/L25 subcomplex. Contacts the 5S rRNA. Binds to the 5S rRNA independently of L5 and L18.

Functionally, this is one of the proteins that binds to the 5S RNA in the ribosome where it forms part of the central protuberance. The sequence is that of Large ribosomal subunit protein bL25 from Clostridium perfringens (strain 13 / Type A).